A 205-amino-acid polypeptide reads, in one-letter code: Methylthioribulose-1-phosphate dehydratase (205 aa).

Cys75 is a substrate binding site. Positions 93 and 95 each coordinate Zn(2+). Residue Glu116 is the Proton donor/acceptor of the active site. His171 lines the Zn(2+) pocket.

It belongs to the aldolase class II family. MtnB subfamily. Zn(2+) is required as a cofactor.

The protein resides in the cytoplasm. It catalyses the reaction 5-(methylsulfanyl)-D-ribulose 1-phosphate = 5-methylsulfanyl-2,3-dioxopentyl phosphate + H2O. The protein operates within amino-acid biosynthesis; L-methionine biosynthesis via salvage pathway; L-methionine from S-methyl-5-thio-alpha-D-ribose 1-phosphate: step 2/6. Its function is as follows. Catalyzes the dehydration of methylthioribulose-1-phosphate (MTRu-1-P) into 2,3-diketo-5-methylthiopentyl-1-phosphate (DK-MTP-1-P). This is Methylthioribulose-1-phosphate dehydratase from Kluyveromyces lactis (strain ATCC 8585 / CBS 2359 / DSM 70799 / NBRC 1267 / NRRL Y-1140 / WM37) (Yeast).